We begin with the raw amino-acid sequence, 373 residues long: 3-dehydroquinate synthase (373 aa).

NAD(+) is bound by residues 67 to 72 (EGEETK), 101 to 105 (GVILD), 125 to 126 (TT), K138, and K147. Residues E180, H240, and H256 each contribute to the Zn(2+) site.

This sequence belongs to the sugar phosphate cyclases superfamily. Dehydroquinate synthase family. NAD(+) serves as cofactor. It depends on Co(2+) as a cofactor. Requires Zn(2+) as cofactor.

It localises to the cytoplasm. The catalysed reaction is 7-phospho-2-dehydro-3-deoxy-D-arabino-heptonate = 3-dehydroquinate + phosphate. It participates in metabolic intermediate biosynthesis; chorismate biosynthesis; chorismate from D-erythrose 4-phosphate and phosphoenolpyruvate: step 2/7. Catalyzes the conversion of 3-deoxy-D-arabino-heptulosonate 7-phosphate (DAHP) to dehydroquinate (DHQ). This Chlamydia trachomatis serovar L2 (strain ATCC VR-902B / DSM 19102 / 434/Bu) protein is 3-dehydroquinate synthase.